A 226-amino-acid polypeptide reads, in one-letter code: Elongation factor G (226 aa).

This sequence belongs to the GTP-binding elongation factor family. EF-G/EF-2 subfamily.

It is found in the cytoplasm. Functionally, catalyzes the GTP-dependent ribosomal translocation step during translation elongation. During this step, the ribosome changes from the pre-translocational (PRE) to the post-translocational (POST) state as the newly formed A-site-bound peptidyl-tRNA and P-site-bound deacylated tRNA move to the P and E sites, respectively. Catalyzes the coordinated movement of the two tRNA molecules, the mRNA and conformational changes in the ribosome. This chain is Elongation factor G (fusA), found in Neisseria gonorrhoeae.